Consider the following 1486-residue polypeptide: Chromosome partition protein MukB (1486 aa).

Residue 34–41 (GGNGAGKS) participates in ATP binding. Coiled-coil stretches lie at residues 326 to 418 (LEAD…QYNQ), 444 to 480 (LETF…QAYQ), and 509 to 603 (RHLA…RAPV). A flexible hinge region spans residues 666-783 (PGGSEDQRLN…EVPLFGRAAR (118 aa)). 3 coiled-coil regions span residues 835–923 (EAEI…AKLE), 977–1115 (EMLS…TAKA), and 1209–1266 (VEAI…QNVS).

This sequence belongs to the SMC family. MukB subfamily. As to quaternary structure, homodimerization via its hinge domain. Binds to DNA via its C-terminal region. Interacts, and probably forms a ternary complex, with MukE and MukF via its C-terminal region. The complex formation is stimulated by calcium or magnesium. Interacts with tubulin-related protein FtsZ.

It is found in the cytoplasm. It localises to the nucleoid. Functionally, plays a central role in chromosome condensation, segregation and cell cycle progression. Functions as a homodimer, which is essential for chromosome partition. Involved in negative DNA supercoiling in vivo, and by this means organize and compact chromosomes. May achieve or facilitate chromosome segregation by condensation DNA from both sides of a centrally located replisome during cell division. The protein is Chromosome partition protein MukB of Escherichia coli (strain ATCC 8739 / DSM 1576 / NBRC 3972 / NCIMB 8545 / WDCM 00012 / Crooks).